The primary structure comprises 651 residues: MSSTESPVPAAAAPAEAVPASTPAPAAEQPAVGNGEQRNNADAANNTSLYVGELDPSVTEAMLFEIFSMIGTVASIRVCRDAVTRRSLGYAYVNFLNAADGERAMEQLNYSLIRNRPCRIMWSQRDPALRRTGQGNIFIKNLDAGIDNKALHDTFAAFGNILSCKVATNETGSLGYGFVHYETAEAAEAAIKHVNGMLLNDKKVYVGHHIPRKERQAKIEETRANFTNVYAKNVDPEVTDDEFEKLFTKFGKITSCVLQRDEDGKSKGFGFVNFEDHNEAQKAVDELHDSDFKGQKLFVARAQKKSEREEELRRSYEAAKNEKLAKFQGVNLYLKNIPESYDDERLREEFAPFGAITSCKIMRAPSGVSRGFGFVCYSAPEEANKAVSEMNGKMLDNRPLYVALAQRKDVRRQQLEAQIMQRNQLRLQQQAAAQGMGYPGPGMYYPQPGAFPGQPGGMVPRPRYAPAGMMPQGMPMAPYGQPGQFPAGMMPQGYRPARPPRGAPNAAGGPAPPAGARPPTGVNGAPRPAGQPVPGQPMPRGPAARPAGRPEADQPGALTAAALAKASPEEQKQMLGEAIYPKVAASQPELAGKLTGMILELPVTELLHLLEESEALDAKVNEALEVLKEYQQNDSAGAEAEANAEAPKTEA.

Positions Met1–Ala27 are enriched in low complexity. Residues Met1 to Asp42 form a disordered region. 4 consecutive RRM domains span residues Thr47 to Arg125, Gly135 to Pro211, Thr227 to Lys304, and Val330 to Arg407. 2 disordered regions span residues Gln481–Gln554 and Gln632–Ala651. The segment covering Ala529 to Arg540 has biased composition (pro residues). A PABC domain is found at Pro555 to Gln632. The span at Ala636–Ala651 shows a compositional bias: low complexity.

It belongs to the polyadenylate-binding protein type-1 family. Part of large ribonucleoprotein complexes (mRNPs) containing RNA-binding proteins RRM4 and PAB1, endosome-binding protein UPA1, core scaffold protein UPA2 and associated factor GRP1. Interacts (via PABC domain) with UPA1 (via PAM2 domain). Interacts (via PABC domain) with UPA2 (via PAM2 domains).

Its subcellular location is the cytoplasm. It localises to the cytoskeleton. It is found in the endosome. RNA-binding protein involved in the formation of polar-growing hyphae which is essential for infection by the plant pathogen. Component of endosomal mRNA transport that regulates polarity of the infectious hyphae by transporting a broad spectrum of cargo mRNAs from the nucleus to cell poles. This chain is Polyadenylate-binding protein 1, found in Mycosarcoma maydis (Corn smut fungus).